Here is a 159-residue protein sequence, read N- to C-terminus: Small ribosomal subunit protein uS7c (159 aa).

This sequence belongs to the universal ribosomal protein uS7 family. In terms of assembly, part of the 30S ribosomal subunit.

It is found in the plastid. Its subcellular location is the chloroplast. One of the primary rRNA binding proteins, it binds directly to 16S rRNA where it nucleates assembly of the head domain of the 30S subunit. This is Small ribosomal subunit protein uS7c (rps7) from Bigelowiella natans (Pedinomonas minutissima).